Reading from the N-terminus, the 95-residue chain is Co-chaperonin GroES (95 aa).

It belongs to the GroES chaperonin family. As to quaternary structure, heptamer of 7 subunits arranged in a ring. Interacts with the chaperonin GroEL.

The protein localises to the cytoplasm. In terms of biological role, together with the chaperonin GroEL, plays an essential role in assisting protein folding. The GroEL-GroES system forms a nano-cage that allows encapsulation of the non-native substrate proteins and provides a physical environment optimized to promote and accelerate protein folding. GroES binds to the apical surface of the GroEL ring, thereby capping the opening of the GroEL channel. This is Co-chaperonin GroES from Chlorobium phaeovibrioides (strain DSM 265 / 1930) (Prosthecochloris vibrioformis (strain DSM 265)).